Consider the following 501-residue polypeptide: Flagellin (501 aa).

The protein belongs to the bacterial flagellin family.

The protein localises to the secreted. Its subcellular location is the bacterial flagellum. In terms of biological role, flagellin is the subunit protein which polymerizes to form the filaments of bacterial flagella. In Salmonella choleraesuis (strain SC-B67), this protein is Flagellin (fliC).